A 107-amino-acid chain; its full sequence is MKWVVIDTVIQPTCGISFSAIWGDMKKIIWYQSTIFLPPGSIFTPVKLGIILKEKEYPITIYNIAPFNKNLWSLLKSSQECPPGESKITNKCLHNSCIIKICPYGLK.

It belongs to the IraM/RssC family.

The protein localises to the cytoplasm. Functionally, inhibits RpoS proteolysis by regulating RssB activity, thereby increasing the stability of the sigma stress factor RpoS during magnesium starvation. In Shigella sonnei (strain Ss046), this protein is Anti-adapter protein IraM.